Here is a 185-residue protein sequence, read N- to C-terminus: V-type proton ATPase subunit E (185 aa).

Belongs to the V-ATPase E subunit family.

In terms of biological role, produces ATP from ADP in the presence of a proton gradient across the membrane. The protein is V-type proton ATPase subunit E of Deinococcus deserti (strain DSM 17065 / CIP 109153 / LMG 22923 / VCD115).